We begin with the raw amino-acid sequence, 241 residues long: Regulatory protein VirG (241 aa).

The Response regulatory domain maps to 3–117 (HVLVIDDDVA…EFLARIRVAL (115 aa)). Asp-52 is modified (4-aspartylphosphate). The ompR/PhoB-type DNA-binding region spans 129–229 (RRSFYFADWT…ARGAGYFFDA (101 aa)).

Phosphorylated by wide host range (WHR) VirA protein.

It is found in the cytoplasm. Its function is as follows. VirG is required for the positive regulation of at least two vir loci encoded by the Ri plasmid of A.rhizogenes. The sequence is that of Regulatory protein VirG (virG) from Rhizobium rhizogenes (Agrobacterium rhizogenes).